We begin with the raw amino-acid sequence, 147 residues long: Probable cytidine deaminase (147 aa).

Residues 4-130 (EELEKCIDAA…KLLPGLFSQE (127 aa)) form the CMP/dCMP-type deaminase domain. Substrate is bound at residue 45 to 51 (NVENSSY). Cysteine 56 is a binding site for Zn(2+). Residue glutamate 58 is the Proton donor of the active site. The Zn(2+) site is built by cysteine 90 and cysteine 93.

This sequence belongs to the cytidine and deoxycytidylate deaminase family. Zn(2+) serves as cofactor.

It carries out the reaction cytidine + H2O + H(+) = uridine + NH4(+). The enzyme catalyses 2'-deoxycytidine + H2O + H(+) = 2'-deoxyuridine + NH4(+). Functionally, this enzyme scavenges exogenous and endogenous cytidine and 2'-deoxycytidine for UMP synthesis. The polypeptide is Probable cytidine deaminase (cda) (Dictyostelium discoideum (Social amoeba)).